A 601-amino-acid polypeptide reads, in one-letter code: Probable Xaa-Pro aminopeptidase P (601 aa).

Mn(2+) contacts are provided by Asp398, Asp409, Glu507, and Glu521.

Belongs to the peptidase M24B family. Requires Mn(2+) as cofactor.

It catalyses the reaction Release of any N-terminal amino acid, including proline, that is linked to proline, even from a dipeptide or tripeptide.. In terms of biological role, catalyzes the removal of a penultimate prolyl residue from the N-termini of peptides. The polypeptide is Probable Xaa-Pro aminopeptidase P (ampp) (Sclerotinia sclerotiorum (strain ATCC 18683 / 1980 / Ss-1) (White mold)).